The sequence spans 507 residues: Maturase K (507 aa).

Belongs to the intron maturase 2 family. MatK subfamily.

It is found in the plastid. The protein localises to the chloroplast. Functionally, usually encoded in the trnK tRNA gene intron. Probably assists in splicing its own and other chloroplast group II introns. The sequence is that of Maturase K from Nymphaea alba (White water-lily).